The sequence spans 225 residues: Membrane protein LapB (225 aa).

To H.influenzae HI_1119.

It is found in the cell membrane. The sequence is that of Membrane protein LapB (lapB) from Mannheimia haemolytica (Pasteurella haemolytica).